A 235-amino-acid chain; its full sequence is 2-C-methyl-D-erythritol 4-phosphate cytidylyltransferase (235 aa).

Belongs to the IspD/TarI cytidylyltransferase family. IspD subfamily. As to quaternary structure, homodimer.

The enzyme catalyses 2-C-methyl-D-erythritol 4-phosphate + CTP + H(+) = 4-CDP-2-C-methyl-D-erythritol + diphosphate. It functions in the pathway isoprenoid biosynthesis; isopentenyl diphosphate biosynthesis via DXP pathway; isopentenyl diphosphate from 1-deoxy-D-xylulose 5-phosphate: step 2/6. In terms of biological role, catalyzes the formation of 4-diphosphocytidyl-2-C-methyl-D-erythritol from CTP and 2-C-methyl-D-erythritol 4-phosphate (MEP). The chain is 2-C-methyl-D-erythritol 4-phosphate cytidylyltransferase from Blochmanniella pennsylvanica (strain BPEN).